The following is a 1426-amino-acid chain: ABC transporter G family member 31 (1426 aa).

N-linked (GlcNAc...) asparagine glycans are attached at residues Asn-6 and Asn-150. Residues 160 to 434 (LSSLRIIKPR…FESLGFRLPP (275 aa)) form the ABC transporter 1 domain. 193-200 (GPPGSGKS) lines the ATP pocket. An N-linked (GlcNAc...) asparagine glycan is attached at Asn-219. The residue at position 276 (Thr-276) is a Phosphothreonine. Residues 512 to 725 (ENLKVCFVRE…GQRAIAVNEF (214 aa)) enclose the ABC transmembrane type-2 1 domain. Helical transmembrane passes span 530–550 (FLYTFRTCQVGFVGLVTATVF), 569–589 (CLFFGLVHMMFNGFSELPLMI), 618–638 (VPYSVLEAVVWSGVVYFTVGL), 649–669 (MLLLFSVHQMALGLFRMMASL), 675–695 (IANTFGSAAILIVFLLGGFVI), and 760–780 (IGIAVLIGYAILFNNVVTLAL). The 253-residue stretch at 826–1078 (MTFHNVNYYV…VLVDYFQGIN (253 aa)) folds into the ABC transporter 2 domain. Residue Asn-856 is glycosylated (N-linked (GlcNAc...) asparagine). 871–878 (GSSGAGKT) contacts ATP. Residues 1151–1365 (SQFLLCLWKQ…TLQGVILSQL (215 aa)) form the ABC transmembrane type-2 2 domain. 7 helical membrane passes run 1172–1192 (LVRLVFTTIAAFILGTVFWDI), 1202–1222 (LITVMGALYSACLFLGVSNAS), 1258–1278 (IPYILTQTILYGVITYFTIGF), 1285–1305 (FVLYLVFMFLTFTYFTFYGMM), 1315–1335 (LAAVISSAFYSLWNLLSGFLV), 1342–1362 (VWWIWFYYICPVAWTLQGVIL), and 1396–1416 (IGVSAAVLVGFCALFFSAFAL).

It belongs to the ABC transporter superfamily. ABCG family. PDR (TC 3.A.1.205) subfamily. As to expression, expressed in seedlings, stems, leaves, siliques and inflorescence. In seeds, confined to the endosperm. Highly expressed in the tapetum of anthers.

The protein localises to the cell membrane. It catalyses the reaction abscisate(in) + ATP + H2O = abscisate(out) + ADP + phosphate + H(+). Its function is as follows. Together with ABCG25, export abscisic acid (ABA) from the endosperm to deliver it to the embryo via ABCG30 and ABCG40-mediated import to suppress radicle extension and subsequent embryonic growth. Together with ABCG9, involved in pollen coat deposition of steryl glycosides required for pollen fitness. May be a general defense protein. The protein is ABC transporter G family member 31 of Arabidopsis thaliana (Mouse-ear cress).